Consider the following 295-residue polypeptide: sn-glycerol-3-phosphate transport system permease protein UgpA (295 aa).

The Cytoplasmic portion of the chain corresponds to 1-11 (MSSSRPVFRSR). The helical transmembrane segment at 12–32 (WLPYLLVAPQLVITVIFFIWP) threads the bilayer. At 33-80 (AGEALWYSLQSVDPFGFSSQFVGLENFVALFHDSYYLDAFWTTIKFSA) the chain is on the periplasmic side. One can recognise an ABC transmembrane type-1 domain in the interval 76-284 (IKFSALVTFS…FLVIILTVVQ (209 aa)). Residues 81–101 (LVTFSGLLVSLFFAALVDYVV) form a helical membrane-spanning segment. The Cytoplasmic portion of the chain corresponds to 102 to 109 (RGSRFYQT). Residues 110–130 (LMLLPYAVAPAVAAVLWIFLF) traverse the membrane as a helical segment. Topologically, residues 131-157 (NPGRGLITHFLGEFGYDWNHAQNSGQA) are periplasmic. The helical transmembrane segment at 158–178 (MFLVVFASVWKQISYNFLFFF) threads the bilayer. Topologically, residues 179-207 (AALQSIPRSLVEAAAIDGAGPIRRFFRLS) are cytoplasmic. The chain crosses the membrane as a helical span at residues 208 to 228 (LPLIAPVSFFLLVVNLVYAFF). Residues 229-262 (DTFPVIDAATAGGPVQATTTLIYKIYCEGFTGLD) lie on the Periplasmic side of the membrane. The chain crosses the membrane as a helical span at residues 263 to 283 (LSASAAQSVVLMFLVIILTVV). At 284–295 (QFRYVESKVRYQ) the chain is on the cytoplasmic side.

This sequence belongs to the binding-protein-dependent transport system permease family. UgpAE subfamily. In terms of assembly, the complex is composed of two ATP-binding proteins (UgpC), two transmembrane proteins (UgpA and UgpE) and a solute-binding protein (UgpB).

The protein resides in the cell inner membrane. Part of the ABC transporter complex UgpBAEC involved in sn-glycerol-3-phosphate (G3P) import. Probably responsible for the translocation of the substrate across the membrane. In Salmonella typhi, this protein is sn-glycerol-3-phosphate transport system permease protein UgpA (ugpA).